The primary structure comprises 237 residues: Probable aquaporin SIP2-1 (237 aa).

Helical transmembrane passes span 15-35, 39-59, 71-91, 122-142, 169-189, and 202-222; these read FMWI…LGFS, PSGE…FAYL, LTAL…SVFV, VAIH…VLLS, ILGS…GWAY, and VYWL…KVVF. The NPA 1 motif lies at 69–71; sequence NPL. The NPA 2 signature appears at 180–182; it reads NPA.

It belongs to the MIP/aquaporin (TC 1.A.8) family. SIP (TC 1.A.8.10) subfamily. In terms of tissue distribution, expressed in dividing cells and elongating regions of the root tips, emerging lateral roots, root steles, cotyledons, main veins of the rosette leaves, vascular tissues of the flower petals, stigma, stamens (anthers and filaments), pollen and the top and bottom (receptacle) of siliques.

The protein localises to the endoplasmic reticulum membrane. Its function is as follows. Water channel required to facilitate the transport of water across cell membrane. Inactive in yeast cells. In Arabidopsis thaliana (Mouse-ear cress), this protein is Probable aquaporin SIP2-1 (SIP2-1).